The following is a 468-amino-acid chain: Uronate isomerase (468 aa).

This sequence belongs to the metallo-dependent hydrolases superfamily. Uronate isomerase family.

It carries out the reaction D-glucuronate = D-fructuronate. It catalyses the reaction aldehydo-D-galacturonate = keto-D-tagaturonate. Its pathway is carbohydrate metabolism; pentose and glucuronate interconversion. This Phocaeicola vulgatus (strain ATCC 8482 / DSM 1447 / JCM 5826 / CCUG 4940 / NBRC 14291 / NCTC 11154) (Bacteroides vulgatus) protein is Uronate isomerase.